The sequence spans 163 residues: MSQSKVEEPLAKEVLANIDIAEILNRIPHRYPFLLVDRAEDYRPHQSIVGIKCVTINEPFFQGHFPGNPVMPGVLIIEALAQTGAVLMSKSLEVETEGKTIFFMSVDNARFRTPVRPGDVIRMEVEVTRARSSIFKFKGVAKVGDKVAAEAEFAAMVVETPKL.

The active site involves histidine 64.

The protein belongs to the thioester dehydratase family. FabZ subfamily.

Its subcellular location is the cytoplasm. The enzyme catalyses a (3R)-hydroxyacyl-[ACP] = a (2E)-enoyl-[ACP] + H2O. In terms of biological role, involved in unsaturated fatty acids biosynthesis. Catalyzes the dehydration of short chain beta-hydroxyacyl-ACPs and long chain saturated and unsaturated beta-hydroxyacyl-ACPs. This is 3-hydroxyacyl-[acyl-carrier-protein] dehydratase FabZ from Caulobacter sp. (strain K31).